The chain runs to 216 residues: Ras-related protein RABA1c (216 aa).

20-27 is a GTP binding site; sequence GDSGVGKS. Residues 42–50 carry the Effector region motif; it reads SKSTIGVEF. GTP is bound by residues 68–72, 126–129, and 156–157; these read DTAGQ, NKSD, and SA. 2 S-geranylgeranyl cysteine lipidation sites follow: C213 and C214.

This sequence belongs to the small GTPase superfamily. Rab family.

The protein resides in the cell membrane. Its function is as follows. Intracellular vesicle trafficking and protein transport. This chain is Ras-related protein RABA1c (RABA1C), found in Arabidopsis thaliana (Mouse-ear cress).